The following is a 603-amino-acid chain: Polypeptide N-acetylgalactosaminyltransferase 10 (603 aa).

At 1 to 11 (MRRKEKRLLQA) the chain is on the cytoplasmic side. A helical; Signal-anchor for type II membrane protein membrane pass occupies residues 12-31 (VALALAALVLLPNVGLWALY). Topologically, residues 32 to 603 (RERQPDGSPG…STVLENFNKN (572 aa)) are lumenal. Residues asparagine 124 and asparagine 146 are each glycosylated (N-linked (GlcNAc...) asparagine). Cystine bridges form between cysteine 135-cysteine 365, cysteine 356-cysteine 432, cysteine 471-cysteine 488, cysteine 523-cysteine 538, and cysteine 563-cysteine 578. Residues 144–253 (LPNTSIIIPF…VNWLPPLLDR (110 aa)) form a catalytic subdomain A region. Aspartate 185 and arginine 214 together coordinate substrate. Aspartate 237 contacts Mn(2+). Residue serine 238 coordinates substrate. Histidine 239 contributes to the Mn(2+) binding site. Residues 311 to 373 (PFESPVMAGG…PCSRVGHIYR (63 aa)) form a catalytic subdomain B region. Tryptophan 342 is a substrate binding site. Histidine 370 serves as a coordination point for Mn(2+). Arginine 373 and tyrosine 378 together coordinate substrate. The interval 373–384 (RKYVPYKVPAGV) is flexible loop. One can recognise a Ricin B-type lectin domain in the interval 458-590 (AAWGEIRNVG…SSLTQQWLFE (133 aa)). An N-linked (GlcNAc...) asparagine glycan is attached at asparagine 593.

It belongs to the glycosyltransferase 2 family. GalNAc-T subfamily. The cofactor is Mn(2+). In terms of tissue distribution, expressed at higher level than GALNT9. In the developing hindbrain region of 14.5 dpc embryos it accumulates in the rapidly dividing, undifferentiated ventricular zone adjacent to the pons. It also accumulates in the regions immediately rostral and caudal to the dorsal rhombic lips differentiating into the cerebellum. Not expressed in the developing choroid plexus.

It localises to the golgi apparatus membrane. The catalysed reaction is L-seryl-[protein] + UDP-N-acetyl-alpha-D-galactosamine = a 3-O-[N-acetyl-alpha-D-galactosaminyl]-L-seryl-[protein] + UDP + H(+). It catalyses the reaction L-threonyl-[protein] + UDP-N-acetyl-alpha-D-galactosamine = a 3-O-[N-acetyl-alpha-D-galactosaminyl]-L-threonyl-[protein] + UDP + H(+). Its pathway is protein modification; protein glycosylation. Catalyzes the initial reaction in O-linked oligosaccharide biosynthesis, the transfer of an N-acetyl-D-galactosamine residue to a serine or threonine residue on the protein receptor. Has activity toward Muc5Ac and EA2 peptide substrates. This chain is Polypeptide N-acetylgalactosaminyltransferase 10 (Galnt10), found in Mus musculus (Mouse).